Here is a 295-residue protein sequence, read N- to C-terminus: 33 kDa chaperonin (295 aa).

2 disulfides stabilise this stretch: Cys237–Cys239 and Cys270–Cys273.

Belongs to the HSP33 family. In terms of processing, under oxidizing conditions two disulfide bonds are formed involving the reactive cysteines. Under reducing conditions zinc is bound to the reactive cysteines and the protein is inactive.

The protein localises to the cytoplasm. Its function is as follows. Redox regulated molecular chaperone. Protects both thermally unfolding and oxidatively damaged proteins from irreversible aggregation. Plays an important role in the bacterial defense system toward oxidative stress. This is 33 kDa chaperonin from Geobacillus sp. (strain WCH70).